We begin with the raw amino-acid sequence, 316 residues long: CD-NTase-associated protein 12 (316 aa).

A TIR domain is found at 4–121; it reads RIFIGSSSEG…MLGITQTRYE (118 aa). The segment at 161 to 316 is STING domain; that stretch reads STVIAISYFE…ECVEIIEPQP (156 aa). 3 residues coordinate 3',3'-c-di-GMP: Phe172, Pro237, and Asp253.

In the C-terminal section; belongs to the bacterial STING family. In terms of assembly, forms homodimers; in the presence of c-di-GMP forms filaments with an ordered array of parallel-stacked subunits.

The enzyme catalyses NAD(+) + H2O = ADP-D-ribose + nicotinamide + H(+). With respect to regulation, NAD(+) hydrolase activity is strongly stimulated by c-di-GMP, weakly by 3'3'-cGAMP, very weakly by c-di-AMP but not at all by 2'3'-cGAMP. Self-association of TIR domains is required for NADase activity. In terms of biological role, effector protein of a CBASS antiviral system with NAD(+) hydrolase activity. CBASS (cyclic oligonucleotide-based antiphage signaling system) provides immunity against bacteriophage. The CD-NTase protein synthesizes cyclic nucleotides in response to infection; these serve as specific second messenger signals. The signals activate a diverse range of effectors, leading to bacterial cell death and thus abortive phage infection. A type I-D(GG) CBASS system. Binds c-di-GMP (synthesized by the cognate CdnE encoded upstream in the same operon) but not c-di-AMP, 2'-3'-cGAMP, 3'-3'-cGAMP or cUMP-AMP (tested without the N-terminal TIR domain). Upon activation by c-di-GMP forms filaments which hydrolyze NAD(+); filament formation is required for enzyme activation. This is CD-NTase-associated protein 12 from Lachnospiraceae bacterium (strain RUG226).